The sequence spans 272 residues: Ribosomal RNA small subunit methyltransferase A (272 aa).

The S-adenosyl-L-methionine site is built by histidine 13, leucine 15, glycine 40, glutamate 61, aspartate 85, and asparagine 105.

This sequence belongs to the class I-like SAM-binding methyltransferase superfamily. rRNA adenine N(6)-methyltransferase family. RsmA subfamily.

It is found in the cytoplasm. The enzyme catalyses adenosine(1518)/adenosine(1519) in 16S rRNA + 4 S-adenosyl-L-methionine = N(6)-dimethyladenosine(1518)/N(6)-dimethyladenosine(1519) in 16S rRNA + 4 S-adenosyl-L-homocysteine + 4 H(+). Its function is as follows. Specifically dimethylates two adjacent adenosines (A1518 and A1519) in the loop of a conserved hairpin near the 3'-end of 16S rRNA in the 30S particle. May play a critical role in biogenesis of 30S subunits. This Bacteroides fragilis (strain ATCC 25285 / DSM 2151 / CCUG 4856 / JCM 11019 / LMG 10263 / NCTC 9343 / Onslow / VPI 2553 / EN-2) protein is Ribosomal RNA small subunit methyltransferase A.